The sequence spans 222 residues: UPF0502 protein SO_1867 (222 aa).

Residues 169 to 193 (EQVSATSLSADSPSADSNSLNAQDR) are compositionally biased toward polar residues. Residues 169 to 195 (EQVSATSLSADSPSADSNSLNAQDRQQ) are disordered.

It belongs to the UPF0502 family.

The polypeptide is UPF0502 protein SO_1867 (Shewanella oneidensis (strain ATCC 700550 / JCM 31522 / CIP 106686 / LMG 19005 / NCIMB 14063 / MR-1)).